The sequence spans 297 residues: Ribosomal RNA small subunit methyltransferase A (297 aa).

Residues Asn-28, Leu-30, Gly-55, Glu-76, Asp-101, and Asn-126 each contribute to the S-adenosyl-L-methionine site.

This sequence belongs to the class I-like SAM-binding methyltransferase superfamily. rRNA adenine N(6)-methyltransferase family. RsmA subfamily.

It localises to the cytoplasm. The catalysed reaction is adenosine(1518)/adenosine(1519) in 16S rRNA + 4 S-adenosyl-L-methionine = N(6)-dimethyladenosine(1518)/N(6)-dimethyladenosine(1519) in 16S rRNA + 4 S-adenosyl-L-homocysteine + 4 H(+). In terms of biological role, specifically dimethylates two adjacent adenosines (A1518 and A1519) in the loop of a conserved hairpin near the 3'-end of 16S rRNA in the 30S particle. May play a critical role in biogenesis of 30S subunits. The chain is Ribosomal RNA small subunit methyltransferase A from Latilactobacillus sakei subsp. sakei (strain 23K) (Lactobacillus sakei subsp. sakei).